Consider the following 413-residue polypeptide: Serine hydroxymethyltransferase (413 aa).

Residues leucine 119 and 123–125 (GHL) contribute to the (6S)-5,6,7,8-tetrahydrofolate site. N6-(pyridoxal phosphate)lysine is present on lysine 228. 351–353 (SPF) contributes to the (6S)-5,6,7,8-tetrahydrofolate binding site.

Belongs to the SHMT family. As to quaternary structure, homodimer. Pyridoxal 5'-phosphate serves as cofactor.

It is found in the cytoplasm. The catalysed reaction is (6R)-5,10-methylene-5,6,7,8-tetrahydrofolate + glycine + H2O = (6S)-5,6,7,8-tetrahydrofolate + L-serine. The protein operates within one-carbon metabolism; tetrahydrofolate interconversion. It functions in the pathway amino-acid biosynthesis; glycine biosynthesis; glycine from L-serine: step 1/1. Catalyzes the reversible interconversion of serine and glycine with tetrahydrofolate (THF) serving as the one-carbon carrier. This reaction serves as the major source of one-carbon groups required for the biosynthesis of purines, thymidylate, methionine, and other important biomolecules. Also exhibits THF-independent aldolase activity toward beta-hydroxyamino acids, producing glycine and aldehydes, via a retro-aldol mechanism. In Lysinibacillus sphaericus (strain C3-41), this protein is Serine hydroxymethyltransferase.